Consider the following 308-residue polypeptide: Ribosomal RNA small subunit methyltransferase H (308 aa).

Residues 33 to 35, Asp52, Phe78, Asp99, and Gln106 each bind S-adenosyl-L-methionine; that span reads GGH. The interval 289-308 is disordered; sequence EEIETNSRSRSAKLRVAEKL.

Belongs to the methyltransferase superfamily. RsmH family.

It is found in the cytoplasm. The enzyme catalyses cytidine(1402) in 16S rRNA + S-adenosyl-L-methionine = N(4)-methylcytidine(1402) in 16S rRNA + S-adenosyl-L-homocysteine + H(+). In terms of biological role, specifically methylates the N4 position of cytidine in position 1402 (C1402) of 16S rRNA. The sequence is that of Ribosomal RNA small subunit methyltransferase H from Thermoanaerobacter sp. (strain X514).